Reading from the N-terminus, the 477-residue chain is Actin-related protein 7 (477 aa).

Belongs to the actin family. Forms a heterodimer with ARP9. Interacts with NPL6. Component of the two forms of the RSC complex composed of at least either RSC1 or RSC2, and ARP7, ARP9, LDB7, NPL6, RSC3, RSC30, RSC4, RSC58, RSC6, RSC8, RSC9, SFH1, STH1, HTL1 and probably RTT102. The complexes interact with histone and histone variant components of centromeric chromatin. Component of the SWI/SNF global transcription activator complex. The 1.14 MDa SWI/SNF complex is composed of 11 different subunits: one copy each of SWI1, SNF2/SWI2, SNF5, SNF12/SWP73, ARP7/SWP61, ARP9/SWP59; two copies each of SWI3, SNF6, SNF11, SWP82; and three copies of TAF14/SWP29.

It localises to the nucleus. Functionally, component of the chromatin structure remodeling complex (RSC), which is involved in transcription regulation and nucleosome positioning. RSC is responsible for the transfer of a histone octamer from a nucleosome core particle to naked DNA. The reaction requires ATP and involves an activated RSC-nucleosome intermediate. Remodeling reaction also involves DNA translocation, DNA twist and conformational change. As a reconfigurer of centromeric and flanking nucleosomes, RSC complex is required both for proper kinetochore function in chromosome segregation and, via a PKC1-dependent signaling pathway, for organization of the cellular cytoskeleton. This subunit is involved in transcriptional regulation. Heterodimer of ARP7 and ARP9 functions with HMG box proteins to facilitate proper chromatin architecture. Heterodimer formation is necessary for assembly into RSC complex. Part of the SWI/SNF complex, an ATP-dependent chromatin remodeling complex, is required for the positive and negative regulation of gene expression of a large number of genes. It changes chromatin structure by altering DNA-histone contacts within a nucleosome, leading eventually to a change in nucleosome position, thus facilitating or repressing binding of gene-specific transcription factors. The sequence is that of Actin-related protein 7 (ARP7) from Saccharomyces cerevisiae (strain ATCC 204508 / S288c) (Baker's yeast).